The primary structure comprises 438 residues: Minor myo-inositol transporter IolF (438 aa).

The next 12 membrane-spanning stretches (helical) occupy residues 15–35 (IAAALANYIDAGSIVAGSAGL), 49–69 (IGLLGALSANAISAAVGALLG), 86–106 (MLVYALGICLVLFGVNFPMLL), 108–128 (GYIIIGLSVGADITASWTIIA), 147–167 (WAAGAVVVLLLSVLAGDLGLL), 171–191 (IVFAHLLVIALITYILRIRLP), 230–250 (ILFLMGVYLVWNLAAGVMGFF), 268–288 (LLQMGLFIFTGLGVALIFMPF), 295–312 (TVFGIAAFMAVIGWTLFL), 317–334 (GLPILLLFIVVIGINNGA), 359–379 (LMFFLVRISIGIWSLFVPMII), and 387–407 (MAAILLGCVTASMIIGLLFAP).

Belongs to the major facilitator superfamily. Sugar transporter (TC 2.A.1.1) family.

It is found in the cell membrane. It participates in polyol metabolism; myo-inositol degradation into acetyl-CoA. In terms of biological role, minor myo-inositol uptake transporter. The polypeptide is Minor myo-inositol transporter IolF (iolF) (Bacillus subtilis (strain 168)).